A 461-amino-acid chain; its full sequence is Transcription factor SOX-10 (461 aa).

Disordered regions lie at residues 1–60 (MADD…ADDD), 154–191 (LRMQ…GEAG), 205–268 (LDHR…DFGN), 350–369 (KAQV…DQPS), and 433–461 (AISD…LSRP). Residues 30–42 (ASDNSSHLASSGN) are compositionally biased toward polar residues. Residues 56 to 96 (EADDDKFPVCIREAVSQVLSGYDWTLVPMPVRVNGSNKSKP) form a dimerization (DIM) region. Residues 98-166 (VKRPMNAFMV…QHKKDHPDYK (69 aa)) constitute a DNA-binding region (HMG box). Over residues 154-167 (LRMQHKKDHPDYKY) the composition is skewed to basic and acidic residues. A compositionally biased stretch (gly residues) spans 181-191 (EGEGQVEGEAG). The interval 221-306 (PEHSSGQSHG…NGHAGHPGHV (86 aa)) is transactivation domain (TAM). Over residues 247-264 (ADSKREGRSLGEGGKPHI) the composition is skewed to basic and acidic residues. The transactivation domain (TAC) stretch occupies residues 350–461 (KAQVKTEGSA…QPVYTTLSRP (112 aa)). Residues 441–461 (VPQSHSPTHWEQPVYTTLSRP) are compositionally biased toward polar residues.

It is found in the cytoplasm. The protein resides in the nucleus. Transcription factor that plays a central role in developing and mature glia. Specifically activates expression of myelin genes, during oligodendrocyte (OL) maturation, thereby playing a central role in oligodendrocyte maturation and CNS myelination. This chain is Transcription factor SOX-10 (SOX10), found in Gallus gallus (Chicken).